Reading from the N-terminus, the 1103-residue chain is Trophozoite exported protein 1 (1103 aa).

A coiled-coil region spans residues 173 to 212 (KKEKIEDKKYEQDDEEENEEEEEEEEEEEGEEENKEDEEF). Disordered regions lie at residues 178–210 (EDKKYEQDDEEENEEEEEEEEEEEGEEENKEDE) and 271–301 (KSYSGDEKINTSDNAKSCSGDEKVITSDNGK). A compositionally biased stretch (acidic residues) spans 184 to 210 (QDDEEENEEEEEEEEEEEGEEENKEDE). The span at 271-280 (KSYSGDEKIN) shows a compositional bias: basic and acidic residues. Coiled coils occupy residues 304–330 (DYVKNESEEQEEKENMLNNKKRSLECN) and 478–518 (YKNY…KLNN). Residues 544 to 601 (YFDEGENPYNRNNKNYRTDNKNSDDNNNNNNYYYNNYNSDDNYNSEDNEYNNGNYRFR) are disordered. Low complexity predominate over residues 568–585 (DNNNNNNYYYNNYNSDDN). Coiled-coil stretches lie at residues 650 to 791 (FRNL…LSGI), 819 to 932 (DEKY…IYKK), and 993 to 1030 (NKKLIGHCQDLEKENSTLQNKLSNEIKNSKMLSKNLSK). Residues 1050–1089 (CSVCMENFRNYIIIKCGHIYCNNCIFNNLKTRNRKCPQCK) form an RING-type zinc finger.

The protein localises to the host cell membrane. The protein is Trophozoite exported protein 1 of Plasmodium falciparum (isolate 3D7).